A 337-amino-acid polypeptide reads, in one-letter code: N-acetyl-gamma-glutamyl-phosphate reductase (337 aa).

Residue Cys-145 is part of the active site.

Belongs to the NAGSA dehydrogenase family. Type 1 subfamily.

It is found in the cytoplasm. The enzyme catalyses N-acetyl-L-glutamate 5-semialdehyde + phosphate + NADP(+) = N-acetyl-L-glutamyl 5-phosphate + NADPH + H(+). It functions in the pathway amino-acid biosynthesis; L-arginine biosynthesis; N(2)-acetyl-L-ornithine from L-glutamate: step 3/4. Catalyzes the NADPH-dependent reduction of N-acetyl-5-glutamyl phosphate to yield N-acetyl-L-glutamate 5-semialdehyde. This is N-acetyl-gamma-glutamyl-phosphate reductase from Methanosarcina barkeri (strain Fusaro / DSM 804).